Consider the following 282-residue polypeptide: uncharacterized protein (282 aa).

This sequence to M.tuberculosis Rv2161c and Rv3079c.

This is an uncharacterized protein from Mycobacterium tuberculosis (strain CDC 1551 / Oshkosh).